Reading from the N-terminus, the 26-residue chain is Mucus envelope protein (26 aa).

In terms of processing, glycosylated. Produced by the opercular gland in the gill cavity and secreted as part of the mucus cocoon.

The protein localises to the secreted. Its function is as follows. Exhibits antibacterial activity. May play a role in protection against parasite settlement. The sequence is that of Mucus envelope protein from Scarus vetula (Queen parrotfish).